The sequence spans 754 residues: Peptidyl-prolyl cis-trans isomerase G (754 aa).

The 166-residue stretch at 11–176 (FFDIAINNQP…AEVRILSCGE (166 aa)) folds into the PPIase cyclophilin-type domain. Residues 182–193 (KVKKEEKKRHKS) show a composition bias toward basic residues. A disordered region spans residues 182-754 (KVKKEEKKRH…SPGTDEDKSG (573 aa)). Residues 194–216 (SSSSSSSSSDSDSSSDSQSSSDS) are compositionally biased toward low complexity. A compositionally biased stretch (basic residues) spans 228-253 (KKRKKKHRKNSRKHKKEKKKRKKSKK). A phosphoserine mark is found at Ser254, Ser256, Ser257, Ser259, and Ser290. Residues 292–310 (PKADEKERKNREREREREC) show a composition bias toward basic and acidic residues. The residue at position 315 (Ser315) is a Phosphoserine. A compositionally biased stretch (basic residues) spans 329-347 (SGRKIKGRGPRRYRTPSRS). Composition is skewed to basic and acidic residues over residues 348 to 368 (RSRD…EMQR) and 379 to 449 (RWIK…DKYK). Residue Ser356 is modified to Phosphoserine. Position 358 is a phosphothreonine (Thr358). Ser386 is modified (phosphoserine). A Glycyl lysine isopeptide (Lys-Gly) (interchain with G-Cter in SUMO2) cross-link involves residue Lys392. Residues Ser397, Ser413, and Ser415 each carry the phosphoserine modification. A compositionally biased stretch (basic residues) spans 450–462 (NKVKKRAKSKSRS). Basic and acidic residues-rich tracts occupy residues 463–553 (KSKE…DITK) and 578–599 (RTHD…QEYR). A compositionally biased stretch (basic residues) spans 616–627 (SRSKDRRRRRRD). Residues 628 to 686 (SRSSEREESQSRNKDKYRNQESKSSHRKENSESEKRMYSKSRDHNSSNNSREKKADRDQ) are compositionally biased toward basic and acidic residues. A phosphoserine mark is found at Ser687 and Ser690. Positions 687-698 (SPFSKIKQSSQD) are enriched in polar residues. Residue Lys693 forms a Glycyl lysine isopeptide (Lys-Gly) (interchain with G-Cter in SUMO2) linkage. Ser696, Ser744, and Ser745 each carry phosphoserine. Residues 707–754 (KNKEDEKIRSSVEKENQKSKGQENDHVHEKNKKFDHESSPGTDEDKSG) show a composition bias toward basic and acidic residues. Thr748 is modified (phosphothreonine). At Ser753 the chain carries Phosphoserine.

In terms of assembly, interacts with CLK1, PNN and with the phosphorylated C-terminal domain of RNA polymerase II. As to expression, ubiquitous.

Its subcellular location is the nucleus matrix. The protein resides in the nucleus speckle. It carries out the reaction [protein]-peptidylproline (omega=180) = [protein]-peptidylproline (omega=0). Its activity is regulated as follows. Inhibited by cyclosporin A (CsA). Its function is as follows. PPIase that catalyzes the cis-trans isomerization of proline imidic peptide bonds in oligopeptides and may therefore assist protein folding. May be implicated in the folding, transport, and assembly of proteins. May play an important role in the regulation of pre-mRNA splicing. The protein is Peptidyl-prolyl cis-trans isomerase G (PPIG) of Homo sapiens (Human).